We begin with the raw amino-acid sequence, 354 residues long: Arginase-2, mitochondrial (354 aa).

A mitochondrion-targeting transit peptide spans 1–22 (MSLRGSLSRLLQTRVHSILKKS). Mn(2+) is bound by residues H120, D143, H145, and D147. Substrate is bound by residues 145–149 (HADIN), 156–158 (SGN), and D202. Residues D251 and D253 each contribute to the Mn(2+) site. 2 residues coordinate substrate: T265 and E296. Positions 334 to 354 (YDQLPTPSSPDESENQARVRI) are disordered.

Belongs to the arginase family. Homotrimer. The cofactor is Mn(2+). Expressed most strongly in kidney and prostate, much less strongly in the brain, skeletal muscle, placenta, lung, mammary gland, macrophage, uterus, testis and gut, but apparently not in the liver, heart and pancreas. Expressed in activated T cells.

Its subcellular location is the mitochondrion. The enzyme catalyses L-arginine + H2O = urea + L-ornithine. Its pathway is nitrogen metabolism; urea cycle; L-ornithine and urea from L-arginine: step 1/1. May play a role in the regulation of extra-urea cycle arginine metabolism and also in down-regulation of nitric oxide synthesis. Extrahepatic arginase functions to regulate L-arginine bioavailability to nitric oxid synthase (NOS). Arginine metabolism is a critical regulator of innate and adaptive immune responses. Seems to be involved in negative regulation of the survival capacity of activated CD4(+) and CD8(+) T cells. May suppress inflammation-related signaling in asthmatic airway epithelium. May contribute to the immune evasion of H.pylori by restricting M1 macrophage activation and polyamine metabolism. In fetal dendritic cells may play a role in promoting immune suppression and T cell TNF-alpha production during gestation. Regulates RPS6KB1 signaling, which promotes endothelial cell senescence and inflammation and implicates NOS3/eNOS dysfunction. Can inhibit endothelial autophagy independently of its enzymatic activity implicating mTORC2 signaling. Involved in vascular smooth muscle cell senescence and apoptosis independently of its enzymatic activity. Since NOS is found in the penile corpus cavernosum smooth muscle, the clitoral corpus cavernosum and the vagina, arginase-2 plays a role in both male and female sexual arousal. This chain is Arginase-2, mitochondrial (ARG2), found in Homo sapiens (Human).